The following is a 430-amino-acid chain: MSVIELVYAREVLDSRGNPTVEVEVVLEDGAMGRAIVPSGASTGAFEAVELRDGDKGRYLGKGVETAVANVNEIIAPEIEGMDAFDQPAIDAIMIELDGTPNKGKLGANAILGVSMAVARAAADEIGLPLFQYLGGVNAKQLPVPMMNILNGGEHADNNVDVQEFMILPVGACCFKEGLRMGAEVFHSLKKVLGEKGLACGVGDEGGFAPNLGSNREALELIVEAITKAGYKPGEDVMLGLDVAATEMYNKETKKYVLAGEGKELTAAEMVALYEDWSNNFPIITIEDGLDEEDWDGWKLLTEKLGNKLQLVGDDLFVTNTERLEKGIENGVANSILVKVNQIGTITETLDAIEMAKRAGYTAVISHRSGETEDSTIADLAVAVNAGQIKTGAPSRTDRVAKYNQLLRIEEMVGEQARYCGLKSFYNLKK.

Gln163 contacts (2R)-2-phosphoglycerate. The active-site Proton donor is Glu205. Asp242, Glu287, and Asp314 together coordinate Mg(2+). Residues Lys339, Arg368, Ser369, and Lys390 each contribute to the (2R)-2-phosphoglycerate site. The active-site Proton acceptor is Lys339.

It belongs to the enolase family. Mg(2+) serves as cofactor.

It localises to the cytoplasm. The protein resides in the secreted. It is found in the cell surface. It carries out the reaction (2R)-2-phosphoglycerate = phosphoenolpyruvate + H2O. It functions in the pathway carbohydrate degradation; glycolysis; pyruvate from D-glyceraldehyde 3-phosphate: step 4/5. Functionally, catalyzes the reversible conversion of 2-phosphoglycerate (2-PG) into phosphoenolpyruvate (PEP). It is essential for the degradation of carbohydrates via glycolysis. The protein is Enolase of Clostridioides difficile (strain 630) (Peptoclostridium difficile).